A 210-amino-acid polypeptide reads, in one-letter code: Protein VNG_2543C (210 aa).

Residues 12 to 206 enclose the AMMECR1 domain; it reads EDGARTVELA…ETGDEDDPVE (195 aa).

This Halobacterium salinarum (strain ATCC 700922 / JCM 11081 / NRC-1) (Halobacterium halobium) protein is Protein VNG_2543C.